A 92-amino-acid polypeptide reads, in one-letter code: MGFYMLLTVALLLTSLMNVEATPVDQAERSALEKSGLGNRIQPRYDNCGDAEQTATSQSAWTKKPMMKNVKLPAIMWSQIAFKIKAKTKTKY.

Positions 1-21 (MGFYMLLTVALLLTSLMNVEA) are cleaved as a signal peptide. A propeptide spanning residues 22–39 (TPVDQAERSALEKSGLGN) is cleaved from the precursor.

Expressed by the venom duct.

It is found in the secreted. The polypeptide is Turripeptide UID-02 (Gemmula speciosa (Splendid gem-turris)).